The chain runs to 299 residues: tRNA dimethylallyltransferase (299 aa).

An ATP-binding site is contributed by 13–20 (GPTASGKT). Substrate is bound at residue 15 to 20 (TASGKT). Positions 38-41 (DSRQ) are interaction with substrate tRNA.

It belongs to the IPP transferase family. Monomer. It depends on Mg(2+) as a cofactor.

It carries out the reaction adenosine(37) in tRNA + dimethylallyl diphosphate = N(6)-dimethylallyladenosine(37) in tRNA + diphosphate. Functionally, catalyzes the transfer of a dimethylallyl group onto the adenine at position 37 in tRNAs that read codons beginning with uridine, leading to the formation of N6-(dimethylallyl)adenosine (i(6)A). The sequence is that of tRNA dimethylallyltransferase from Prochlorococcus marinus (strain MIT 9313).